The sequence spans 277 residues: 3-methyl-2-oxobutanoate hydroxymethyltransferase (277 aa).

Mg(2+) contacts are provided by D42 and D81. 3-methyl-2-oxobutanoate-binding positions include D42–S43, D81, and K110. A Mg(2+)-binding site is contributed by E112. The active-site Proton acceptor is the E179.

Belongs to the PanB family. Homodecamer; pentamer of dimers. Mg(2+) serves as cofactor.

The protein localises to the cytoplasm. It carries out the reaction 3-methyl-2-oxobutanoate + (6R)-5,10-methylene-5,6,7,8-tetrahydrofolate + H2O = 2-dehydropantoate + (6S)-5,6,7,8-tetrahydrofolate. Its pathway is cofactor biosynthesis; (R)-pantothenate biosynthesis; (R)-pantoate from 3-methyl-2-oxobutanoate: step 1/2. Catalyzes the reversible reaction in which hydroxymethyl group from 5,10-methylenetetrahydrofolate is transferred onto alpha-ketoisovalerate to form ketopantoate. The protein is 3-methyl-2-oxobutanoate hydroxymethyltransferase of Anaplasma marginale (strain Florida).